The following is a 586-amino-acid chain: Kelch-like protein 7 (586 aa).

One can recognise a BTB domain in the interval 44–111 (CDVILMVQER…AYTARISVNS (68 aa)). The BACK domain occupies 146–248 (CLGISVLAEC…SKNFLSKTVQ (103 aa)). Kelch repeat units follow at residues 294–336 (RIAL…FWDN), 337–382 (VVYI…AAEG), 383–430 (KIYT…EANG), 431–481 (LIYV…FVKD), 483–528 (IFAV…AVGS), and 530–575 (VYVL…CVVD).

Homodimer. Component of the BCR(KLHL7) E3 ubiquitin ligase complex.

The protein localises to the nucleus. The protein resides in the cytoplasm. It participates in protein modification; protein ubiquitination. Its function is as follows. Substrate-specific adapter of a BCR (BTB-CUL3-RBX1) E3 ubiquitin ligase complex. The BCR(KLHL7) complex acts by mediating ubiquitination and subsequent degradation of substrate proteins. Probably mediates 'Lys-48'-linked ubiquitination. The polypeptide is Kelch-like protein 7 (KLHL7) (Gallus gallus (Chicken)).